The following is a 418-amino-acid chain: FK506-binding protein 3 (418 aa).

Disordered regions lie at residues 49 to 133, 172 to 273, and 289 to 309; these read PSTL…DDEF, SLTG…ETKK, and LEEGPTKKEEKKEEKKEKPKT. Positions 61–89 are enriched in acidic residues; it reads YDDEDDAGGLLGDYDEDELDISEEEEEEE. Basic residues predominate over residues 93–103; the sequence is KSKKGKGKGKS. Composition is skewed to acidic residues over residues 108–133 and 186–224; these read EEEEEEEEDEDEGDEELIEIDTDDEF and GYDDEDDDEEDDESYDEDEDDYLTPDEEADLEELEDASD. Positions 225-239 are enriched in basic and acidic residues; that stretch reads VEAKIQELVEKEQSK. A compositionally biased stretch (acidic residues) spans 251–264; sequence PEEEEEEEEEEEEE. A PPIase FKBP-type domain is found at 332 to 418; it reads GSKVGMRYIG…TFDVKLVSLK (87 aa).

It belongs to the FKBP-type PPIase family. FKBP3/4 subfamily.

The protein resides in the nucleus. Its subcellular location is the nucleolus. The enzyme catalyses [protein]-peptidylproline (omega=180) = [protein]-peptidylproline (omega=0). With respect to regulation, inhibited by both FK506 and rapamycin. In terms of biological role, PPIases accelerate the folding of proteins. It catalyzes the cis-trans isomerization of proline imidic peptide bonds in oligopeptides. This is FK506-binding protein 3 (FPR3) from Kluyveromyces lactis (strain ATCC 8585 / CBS 2359 / DSM 70799 / NBRC 1267 / NRRL Y-1140 / WM37) (Yeast).